The sequence spans 155 residues: Probable jacalin-related lectin 26 (155 aa).

2 consecutive transmembrane segments (helical) span residues 26–48 (AYLY…IAMI) and 127–149 (VSFV…VLFL). The Jacalin-type lectin domain maps to 47–155 (MIRAGSVGKK…VLFLMKFKRS (109 aa)).

Belongs to the jacalin lectin family.

The protein localises to the membrane. In Arabidopsis thaliana (Mouse-ear cress), this protein is Probable jacalin-related lectin 26 (JAL26).